A 247-amino-acid chain; its full sequence is Syntaxin-like protein fsv1 (247 aa).

Residues 27–94 (NPDEEIESSL…FEKQRRASSI (68 aa)) adopt a coiled-coil conformation. Residues 88 to 130 (QRRASSIPADGTSAFSANPQVASTNNKLTPLPSLQKTTSSSEG) are disordered. Residues 100–130 (SAFSANPQVASTNNKLTPLPSLQKTTSSSEG) show a composition bias toward polar residues. Residues 159–221 (QQMLNEQEES…DHAKNRLNKV (63 aa)) form the t-SNARE coiled-coil homology domain.

It localises to the golgi apparatus membrane. The protein localises to the prevacuolar compartment membrane. Its function is as follows. Involved in vesicle-mediated protein transport between the Golgi and the vacuole. In Schizosaccharomyces pombe (strain 972 / ATCC 24843) (Fission yeast), this protein is Syntaxin-like protein fsv1 (fsv1).